We begin with the raw amino-acid sequence, 86 residues long: Toxin Aam2 (86 aa).

The first 20 residues, 1–20 (MNYLITISLALLLMTGVASG), serve as a signal peptide directing secretion. The LCN-type CS-alpha/beta domain occupies 22-84 (RDGYIADAGN…VPIKVPGKCN (63 aa)). Cystine bridges form between Cys-32-Cys-83, Cys-36-Cys-56, Cys-42-Cys-66, and Cys-46-Cys-68. At Asn-84 the chain carries Asparagine amide.

This sequence belongs to the long (4 C-C) scorpion toxin superfamily. Sodium channel inhibitor family. Alpha subfamily. Expressed by the venom gland.

The protein resides in the secreted. Functionally, alpha toxins bind voltage-independently at site-3 of sodium channels (Nav) and inhibit the inactivation of the activated channels, thereby blocking neuronal transmission. This chain is Toxin Aam2, found in Androctonus amoreuxi (African fattail scorpion).